A 257-amino-acid chain; its full sequence is MTLSFTKMHGLGNDFVVIDGRQNDPALETATIRHLCDRRFGIGCDQLVLLTPPTLAGADVHVRFFNPDGSEAGACGNASRCVAKFVGGAPTLQTAAGLLPTAQDGDLFTVDMGTPRLDWQDVPLSRACDTLHLPLHDAAACSMGNPHATLFGDAFRAEALGPGLERDPLFPERANIGFAQILSPIHMRLRVWERGAGLTLACGSGACAAVVNAVRRGLTERTCTVTMDGGDLRITWREDGHVFMTGPAVTVFHGTTA.

Positions 13, 46, and 66 each coordinate substrate. Cys-75 acts as the Proton donor in catalysis. Substrate is bound by residues 76-77, Asn-145, Asn-175, and 193-194; these read GN and ER. Cys-202 acts as the Proton acceptor in catalysis. 203–204 is a substrate binding site; that stretch reads GS.

Belongs to the diaminopimelate epimerase family. Homodimer.

It localises to the cytoplasm. It carries out the reaction (2S,6S)-2,6-diaminopimelate = meso-2,6-diaminopimelate. It functions in the pathway amino-acid biosynthesis; L-lysine biosynthesis via DAP pathway; DL-2,6-diaminopimelate from LL-2,6-diaminopimelate: step 1/1. Functionally, catalyzes the stereoinversion of LL-2,6-diaminopimelate (L,L-DAP) to meso-diaminopimelate (meso-DAP), a precursor of L-lysine and an essential component of the bacterial peptidoglycan. The sequence is that of Diaminopimelate epimerase from Gluconobacter oxydans (strain 621H) (Gluconobacter suboxydans).